The chain runs to 143 residues: Synuclein (143 aa).

3 tandem repeats follow at residues 20–30, 31–41, and 42–52. The segment at 20–78 is 5 X 11 AA tandem repeats of [EGST]-K-T-K-[EQ]-[GQ]-[VA]-X(4); the sequence is EKTKQGVQDAAEKTKQGVQDAAEKTKEGVMYVGTKTKEGVVQSVNTVTEKTKEQANVVG. The 4; approximate repeat unit spans residues 53–67; that stretch reads TKTKEGVVQSVNTVT. Repeat 5 spans residues 68-78; the sequence is EKTKEQANVVG. The segment at 113–143 is disordered; sequence REIPAEQVAEGKQTTQEPLVEATEATEETGK.

It belongs to the synuclein family. In terms of tissue distribution, nervous system tissue. Found in the electric lobe, the brain and the spinal cord.

It localises to the nucleus. Functionally, may have a role in synaptic regulation or signal transduction. The polypeptide is Synuclein (Tetronarce californica (Pacific electric ray)).